The following is a 165-amino-acid chain: Peptide methionine sulfoxide reductase MsrA (165 aa).

Residue Cys11 is part of the active site.

It belongs to the MsrA Met sulfoxide reductase family.

The catalysed reaction is L-methionyl-[protein] + [thioredoxin]-disulfide + H2O = L-methionyl-(S)-S-oxide-[protein] + [thioredoxin]-dithiol. It carries out the reaction [thioredoxin]-disulfide + L-methionine + H2O = L-methionine (S)-S-oxide + [thioredoxin]-dithiol. Functionally, has an important function as a repair enzyme for proteins that have been inactivated by oxidation. Catalyzes the reversible oxidation-reduction of methionine sulfoxide in proteins to methionine. In Ureaplasma parvum serovar 3 (strain ATCC 27815 / 27 / NCTC 11736), this protein is Peptide methionine sulfoxide reductase MsrA.